The primary structure comprises 577 residues: MSEKYVFSEKHPGPLVVEGKLTDAERMKTESNFLRGTIAEDLNDGLTGGFKGDNFLLIRFHGMYQQDDRDIRAERAEQKLEPRHAMLLRCRLPGGVMTPQQWLRIDKFAGENTIYGSIRITNRQTFQYHGILKSNVKPVHQMLNSIGLDALATANDMNRNVLCTSNPIESELHQQAYEWAKTISEHLLPRTRAYAEIWMDQEKVATTDEEPILGSTYLPRKFKTTVVVPPQNDVDLHANDLNFVAIADNGRLVGFNVLVGGGLSIAHGDKETYPRTASELGYISIEHTLAIAEAVVTTQRDWGNRTNRKNAKTKYTLERVGVDNFKQEVEARAGVKFEAVRPYEFTERGDRIGWVKGIDNKWHLTLFIENGRILDYPGRPLKTGLAEIAKIHKGDFRLTANQNLIVAGVPARSKAKIDALAREHGLIDDSVSEQRKNSMACVSFPTCPLAMAEAERFLPEFVTKVEGIMQQHGVGDEHIVLRVTGCPNGCGRSMLAEIGLVGKAMGRYNLHLGGNREGTRIPRMYRENINETEILAEIDRLVGLWAQDRLQNEGFGDFVIRTNIIRPVLDPARDFYD.

[4Fe-4S] cluster is bound by residues cysteine 441, cysteine 447, cysteine 486, and cysteine 490. Cysteine 490 lines the siroheme pocket.

This sequence belongs to the nitrite and sulfite reductase 4Fe-4S domain family. Alpha(8)-beta(8). The alpha component is a flavoprotein, the beta component is a hemoprotein. Requires siroheme as cofactor. [4Fe-4S] cluster is required as a cofactor.

The enzyme catalyses hydrogen sulfide + 3 NADP(+) + 3 H2O = sulfite + 3 NADPH + 4 H(+). The protein operates within sulfur metabolism; hydrogen sulfide biosynthesis; hydrogen sulfide from sulfite (NADPH route): step 1/1. Component of the sulfite reductase complex that catalyzes the 6-electron reduction of sulfite to sulfide. This is one of several activities required for the biosynthesis of L-cysteine from sulfate. This Pectobacterium atrosepticum (strain SCRI 1043 / ATCC BAA-672) (Erwinia carotovora subsp. atroseptica) protein is Sulfite reductase [NADPH] hemoprotein beta-component.